A 340-amino-acid chain; its full sequence is DnaJ homolog subfamily B member 1 (340 aa).

Residues 2–70 (GKDYYQTLGL…REIFDRYGEE (69 aa)) form the J domain. Thr307 bears the Phosphothreonine mark.

As to quaternary structure, interacts with DNAJC3. Interacts with HSF1 (via transactivation domain); this interaction results in the inhibition of heat shock- and HSF1-induced transcriptional activity during the attenuation and recovery phase period of the heat shock response. Interacts with BAG3.

It localises to the cytoplasm. It is found in the nucleus. The protein localises to the nucleolus. In terms of biological role, interacts with HSP70 and can stimulate its ATPase activity. Stimulates the association between HSC70 and HIP. Negatively regulates heat shock-induced HSF1 transcriptional activity during the attenuation and recovery phase period of the heat shock response. Stimulates ATP hydrolysis and the folding of unfolded proteins mediated by HSPA1A/B (in vitro). The sequence is that of DnaJ homolog subfamily B member 1 (Dnajb1) from Mus musculus (Mouse).